A 160-amino-acid chain; its full sequence is SsrA-binding protein (160 aa).

The tract at residues Lys-136–Asp-160 is disordered.

This sequence belongs to the SmpB family.

The protein localises to the cytoplasm. Functionally, required for rescue of stalled ribosomes mediated by trans-translation. Binds to transfer-messenger RNA (tmRNA), required for stable association of tmRNA with ribosomes. tmRNA and SmpB together mimic tRNA shape, replacing the anticodon stem-loop with SmpB. tmRNA is encoded by the ssrA gene; the 2 termini fold to resemble tRNA(Ala) and it encodes a 'tag peptide', a short internal open reading frame. During trans-translation Ala-aminoacylated tmRNA acts like a tRNA, entering the A-site of stalled ribosomes, displacing the stalled mRNA. The ribosome then switches to translate the ORF on the tmRNA; the nascent peptide is terminated with the 'tag peptide' encoded by the tmRNA and targeted for degradation. The ribosome is freed to recommence translation, which seems to be the essential function of trans-translation. The polypeptide is SsrA-binding protein (Pseudomonas putida (strain GB-1)).